The primary structure comprises 445 residues: Exodeoxyribonuclease 7 large subunit (445 aa).

The protein belongs to the XseA family. In terms of assembly, heterooligomer composed of large and small subunits.

The protein localises to the cytoplasm. The catalysed reaction is Exonucleolytic cleavage in either 5'- to 3'- or 3'- to 5'-direction to yield nucleoside 5'-phosphates.. Bidirectionally degrades single-stranded DNA into large acid-insoluble oligonucleotides, which are then degraded further into small acid-soluble oligonucleotides. The chain is Exodeoxyribonuclease 7 large subunit from Limosilactobacillus reuteri (strain DSM 20016) (Lactobacillus reuteri).